Reading from the N-terminus, the 168-residue chain is Small ribosomal subunit protein uS8 (168 aa).

The interval 59-93 (EEYKKMKELAEKSPNPKMKRYLKQLEEYNKGTQYP) is not found in other S8 sequences.

This sequence belongs to the universal ribosomal protein uS8 family. As to quaternary structure, part of the 30S ribosomal subunit. Contacts proteins S5 and S12.

One of the primary rRNA binding proteins, it binds directly to 16S rRNA central domain where it helps coordinate assembly of the platform of the 30S subunit. This Aquifex aeolicus (strain VF5) protein is Small ribosomal subunit protein uS8.